The sequence spans 272 residues: 2-dehydro-3-deoxyphosphooctonate aldolase (272 aa).

It belongs to the KdsA family.

The protein localises to the cytoplasm. It catalyses the reaction D-arabinose 5-phosphate + phosphoenolpyruvate + H2O = 3-deoxy-alpha-D-manno-2-octulosonate-8-phosphate + phosphate. It participates in carbohydrate biosynthesis; 3-deoxy-D-manno-octulosonate biosynthesis; 3-deoxy-D-manno-octulosonate from D-ribulose 5-phosphate: step 2/3. Its pathway is bacterial outer membrane biogenesis; lipopolysaccharide biosynthesis. This chain is 2-dehydro-3-deoxyphosphooctonate aldolase, found in Geotalea uraniireducens (strain Rf4) (Geobacter uraniireducens).